The primary structure comprises 157 residues: UPF0262 protein RHE_CH00582 (157 aa).

The protein belongs to the UPF0262 family.

This is UPF0262 protein RHE_CH00582 from Rhizobium etli (strain ATCC 51251 / DSM 11541 / JCM 21823 / NBRC 15573 / CFN 42).